The chain runs to 384 residues: uncharacterized protein (384 aa).

10 consecutive transmembrane segments (helical) span residues 11–31 (LWFIAISAAGGFILSLTGISI), 33–53 (WMIGTLIVACCLAMIRPAWLM), 66–86 (LALGQMILGIELGQKLNLSVL), 94–114 (FSVGVMLILSILLAMLSGYVL), 153–173 (LVQMMRVLLVVLSIPFLVILI), 197–217 (LAPVLWTVILILAAWGACKAA), 224–244 (APWLLGSMLGVAIVHVGGAAV), 284–304 (IIIVGFVSSVGLIAAMFLSAV), 309–329 (LTGISLITSVLAFAPGGIAEM), and 342–362 (FVVAVQVIRVILVIALLPPFY).

Belongs to the AbrB family.

The protein resides in the cell membrane. This is an uncharacterized protein from Bacillus subtilis (strain 168).